The following is a 47-amino-acid chain: Delta-stichotoxin-Hcr1d (47 aa).

Disulfide bonds link Cys-3/Cys-43, Cys-5/Cys-33, and Cys-26/Cys-44.

It belongs to the sea anemone sodium channel inhibitory toxin family. Type II subfamily.

The protein resides in the secreted. The protein localises to the nematocyst. Its function is as follows. Binds to site 3 of voltage-gated sodium channels and inhibits the inactivation process. The protein is Delta-stichotoxin-Hcr1d of Radianthus crispa (Leathery sea anemone).